Here is a 466-residue protein sequence, read N- to C-terminus: UDP-N-acetylmuramate--L-alanine ligase (466 aa).

117 to 123 contacts ATP; sequence GTHGKTT.

It belongs to the MurCDEF family.

It localises to the cytoplasm. The enzyme catalyses UDP-N-acetyl-alpha-D-muramate + L-alanine + ATP = UDP-N-acetyl-alpha-D-muramoyl-L-alanine + ADP + phosphate + H(+). Its pathway is cell wall biogenesis; peptidoglycan biosynthesis. Functionally, cell wall formation. The chain is UDP-N-acetylmuramate--L-alanine ligase from Streptomyces griseus subsp. griseus (strain JCM 4626 / CBS 651.72 / NBRC 13350 / KCC S-0626 / ISP 5235).